Consider the following 451-residue polypeptide: UPF0210 protein NMB1652 (451 aa).

This sequence belongs to the UPF0210 family. As to quaternary structure, homodimer.

This Neisseria meningitidis serogroup B (strain ATCC BAA-335 / MC58) protein is UPF0210 protein NMB1652.